The following is a 583-amino-acid chain: Torsin-1A-interacting protein 1 (583 aa).

The Nuclear portion of the chain corresponds to 1-339 (MAGERWRAEG…DESSVKIKWW (339 aa)). The disordered stretch occupies residues 23-208 (APIREGRRRL…PPLRSPRPDA (186 aa)). The residue at position 60 (S60) is a Phosphoserine. Basic and acidic residues-rich tracts occupy residues 70–101 (FEPR…EVRE) and 115–132 (GPQE…RLEQ). S134, S142, S155, and S157 each carry phosphoserine. A compositionally biased stretch (polar residues) spans 166–188 (SSQPVTSQTVSKKTVRTPETSVM). A Phosphoserine modification is found at S189. T222 carries the phosphothreonine modification. 3 positions are modified to phosphoserine: S228, S231, and S242. K309 is covalently cross-linked (Glycyl lysine isopeptide (Lys-Gly) (interchain with G-Cter in SUMO2)). S316 bears the Phosphoserine mark. A helical transmembrane segment spans residues 340–360 (LLILVAALAMGIYWFFHTPVV). The interaction with TOR1A stretch occupies residues 356–583 (HTPVVETTAV…ENALKAGSCL (228 aa)). Positions 360-388 (VETTAVQEFQNQMKQLQSKYQSQDEKLWK) form a coiled coil. The Perinuclear space portion of the chain corresponds to 361–583 (ETTAVQEFQN…ENALKAGSCL (223 aa)). N-linked (GlcNAc...) asparagine glycosylation occurs at N399.

Belongs to the TOR1AIP family. As to quaternary structure, interacts with ATP1B4. Interacts with TOR1A (ATP-bound). Interacts with TOR1B, TOR2A and TOR3A. Interacts with VIM.

Its subcellular location is the nucleus inner membrane. Functionally, required for nuclear membrane integrity. Induces TOR1A and TOR1B ATPase activity and is required for their location on the nuclear membrane. Binds to A- and B-type lamins. Possible role in membrane attachment and assembly of the nuclear lamina. In Rattus norvegicus (Rat), this protein is Torsin-1A-interacting protein 1 (Tor1aip1).